The following is a 94-amino-acid chain: U1-theraphotoxin-Sp1a (94 aa).

An N-terminal signal peptide occupies residues 1–22; sequence MIFLLPSIISVMLLAEPVLMLG. Residues 23-58 constitute a propeptide that is removed on maturation; the sequence is DTEDADLMEMVQLSRPFFNPIIRAVELVELREERQR. Disulfide bonds link Cys60–Cys78, Cys67–Cys83, and Cys77–Cys88. Val92 carries the valine amide modification.

Belongs to the neurotoxin 14 (magi-1) family. OAIP-1 subfamily. In terms of tissue distribution, expressed by the venom gland.

It localises to the secreted. Its function is as follows. Probable ion channel inhibitor. Shows insecticidal activity. Acts synergistically with the neonicotinoid insecticide imidacloprid. Is neither a repellent that repels insects nor an attractant that is preferentially consumed by insects. Is very stable. The chain is U1-theraphotoxin-Sp1a from Selenotypus plumipes (Australian featherleg tarantula).